The sequence spans 179 residues: Large ribosomal subunit protein uL5 (179 aa).

It belongs to the universal ribosomal protein uL5 family. Part of the 50S ribosomal subunit; part of the 5S rRNA/L5/L18/L25 subcomplex. Contacts the 5S rRNA and the P site tRNA. Forms a bridge to the 30S subunit in the 70S ribosome.

In terms of biological role, this is one of the proteins that bind and probably mediate the attachment of the 5S RNA into the large ribosomal subunit, where it forms part of the central protuberance. In the 70S ribosome it contacts protein S13 of the 30S subunit (bridge B1b), connecting the 2 subunits; this bridge is implicated in subunit movement. Contacts the P site tRNA; the 5S rRNA and some of its associated proteins might help stabilize positioning of ribosome-bound tRNAs. This Microcystis aeruginosa (strain NIES-843 / IAM M-2473) protein is Large ribosomal subunit protein uL5.